Here is an 86-residue protein sequence, read N- to C-terminus: Large ribosomal subunit protein uL23 (86 aa).

It belongs to the universal ribosomal protein uL23 family. As to quaternary structure, part of the 50S ribosomal subunit. Contacts protein L29.

Binds to 23S rRNA. One of the proteins that surrounds the polypeptide exit tunnel on the outside of the ribosome. The protein is Large ribosomal subunit protein uL23 of Pyrococcus abyssi (strain GE5 / Orsay).